An 83-amino-acid chain; its full sequence is MFNLFLTDTVWYVGQIIFIFAVCLMVTIIVVAFLASIKLCIQLCGLCNTLVLSPSIYLYDRSKQLYKYYNEEMRLPLLEVDDI.

Residues 1-16 are Virion surface-facing; it reads MFNLFLTDTVWYVGQI. Residues 17 to 37 traverse the membrane as a helical segment; that stretch reads IFIFAVCLMVTIIVVAFLASI. Residues 38–79 are Intravirion-facing; the sequence is KLCIQLCGLCNTLVLSPSIYLYDRSKQLYKYYNEEMRLPLLE.

Belongs to the betacoronaviruses E protein family. In terms of assembly, homopentamer. Interacts with membrane protein M in the budding compartment of the host cell, which is located between endoplasmic reticulum and the Golgi complex. Interacts with Nucleoprotein.

The protein resides in the host Golgi apparatus membrane. Component of the viral envelope that plays a central role in virus morphogenesis and assembly. It is sufficient to form virus-like particles. Seems to be important for creating the membrane curvature needed to acquire the rounded, stable and infectious particle phenotype. Acts as a viroporin, inducing the formation of hydrophilic pores in cellular membranes. Also induces apoptosis. Its function is as follows. Plays a central role in virus morphogenesis and assembly. Acts as a viroporin and self-assembles in host membranes forming pentameric protein-lipid pores that allow ion transport. Also plays a role in the induction of apoptosis. The chain is Envelope small membrane protein from Mus musculus (Mouse).